A 92-amino-acid chain; its full sequence is Long neurotoxin 77 (92 aa).

Positions 1–21 are cleaved as a signal peptide; the sequence is MKTLLLTLVVVTIVCLDLGDS. Cystine bridges form between Cys24-Cys41, Cys34-Cys62, Cys47-Cys51, Cys66-Cys77, and Cys78-Cys83.

This sequence belongs to the three-finger toxin family. Long-chain subfamily. Type II alpha-neurotoxin sub-subfamily. As to expression, expressed by the venom gland.

Its subcellular location is the secreted. Functionally, binds with high affinity to muscular (alpha-1/CHRNA1) and neuronal (alpha-7/CHRNA7) nicotinic acetylcholine receptor (nAChR) and inhibits acetylcholine from binding to the receptor, thereby impairing neuromuscular and neuronal transmission. This chain is Long neurotoxin 77, found in Drysdalia coronoides (White-lipped snake).